A 201-amino-acid polypeptide reads, in one-letter code: Fimbrial protein FimX (201 aa).

The N-terminal stretch at 1 to 21 (MQAKTFLLGAALAGVALAAHA) is a signal peptide. C37 and C79 are joined by a disulfide.

This sequence belongs to the fimbrial protein family.

It is found in the fimbrium. In terms of biological role, bordetella pertussis is the causative agent of whooping cough. An essential step in the disease process is the attachment of the bacteria to the ciliated epithelium of the respiratory tract, enabling the organism to resist normal host-clearance mechanisms. It is unclear which bacterial cell surface component are responsible for adherence but the fimbriae of B.pertussis are prime candidates for being involved in this process. This Bordetella pertussis (strain Tohama I / ATCC BAA-589 / NCTC 13251) protein is Fimbrial protein FimX (fimX).